The following is a 245-amino-acid chain: Octanoyltransferase (245 aa).

Positions 54–238 (GEATELVWLL…AFENIFGETR (185 aa)) constitute a BPL/LPL catalytic domain. Substrate-binding positions include 92 to 99 (RGGQLTYH), 167 to 169 (AIG), and 180 to 182 (GIA). The active-site Acyl-thioester intermediate is cysteine 198.

This sequence belongs to the LipB family.

It is found in the cytoplasm. It carries out the reaction octanoyl-[ACP] + L-lysyl-[protein] = N(6)-octanoyl-L-lysyl-[protein] + holo-[ACP] + H(+). It participates in protein modification; protein lipoylation via endogenous pathway; protein N(6)-(lipoyl)lysine from octanoyl-[acyl-carrier-protein]: step 1/2. Functionally, catalyzes the transfer of endogenously produced octanoic acid from octanoyl-acyl-carrier-protein onto the lipoyl domains of lipoate-dependent enzymes. Lipoyl-ACP can also act as a substrate although octanoyl-ACP is likely to be the physiological substrate. This chain is Octanoyltransferase, found in Rhodopseudomonas palustris (strain ATCC BAA-98 / CGA009).